Reading from the N-terminus, the 100-residue chain is UPF0213 protein YhbQ (100 aa).

The GIY-YIG domain occupies 2–77 (TPWFLYLIRT…KQLTKRQKER (76 aa)).

This sequence belongs to the UPF0213 family.

In Escherichia coli O1:K1 / APEC, this protein is UPF0213 protein YhbQ.